The primary structure comprises 451 residues: Prenyltransferase anuH (451 aa).

6 residues coordinate dimethylallyl diphosphate: Arg105, Lys189, Tyr191, Lys257, Tyr259, and Tyr422.

The protein belongs to the tryptophan dimethylallyltransferase family.

The catalysed reaction is (8S)-annullatin E + dimethylallyl diphosphate = (8S)-annullatin J + diphosphate. It participates in secondary metabolite biosynthesis. Functionally, cytochrome P450 monooxygenase; part of the gene cluster that mediates the biosynthesis of annullatin D, an alkylated aromatic polyketide with a fused dihydrobenzofuran lactone ring system that exhibits potent agonistic activities toward the cannabinoid receptors. Within the pathway, anuH uses dimethylallyl diphosphate (DMAPP) to prenylate (8S)-annullatin E to produce (8S)-annullatin J. Geranyl and farnesyl diphosphate are not consumed by anuH for prenylation. 2-hydroxymethyl-3-pentylphenol, without the hydroxyl group at the side chain, is also accepted by anuH, but only with low conversion yield. The annullatin backbone 2-hydroxymethyl-3-pentylphenol is assembled from one acetyl-CoA starter unit and 5 malonyl-CoA elongation units by cooperation of the highly reducing polyketide synthase anuA, the short-chain dehydrogenase anuB and the oxidoreductase anuC, before being hydroxylated at the C-5 alkyl chain by the cytochrome P450 monooxygenase anuE to form (8S)-annullatin E. The prenyltransferase anuH subsequently installs one isoprenyl group at the benzene ring to form (8S)-annullatin J. Enzymatic or nonenzymatic dihydro-benzofuran ring formation between the prenyl and the phenolic hydroxyl groups in (8S)-annullatin J results in two diastereomers (2S,9S)-annullatin H and compound 12. The intermediate (2S,9S)-annullatin H is then converted to (2S,9S)-annullatin D by the FAD-linked oxidoreductase anuG-catalyzed five-member lactone ring formation. The isomer 12 acts as a substrate for the short-chain dehydrogenase anuF and is oxidized to (2R)-annullatin F, which is subsequently acetylated by an acetyltransferase leading to (2R)-annullatin G formation. The remaining enzymes identified within the cluster, anuD, anuI and anuJ, seem not to be involved in annullatin biosynthesis. This Penicillium roqueforti (strain FM164) protein is Prenyltransferase anuH.